The sequence spans 404 residues: Cysteine desulfurase IscS (404 aa).

Pyridoxal 5'-phosphate-binding positions include 75 to 76 (AT), asparagine 155, glutamine 183, and 203 to 205 (SGH). Lysine 206 carries the N6-(pyridoxal phosphate)lysine modification. Residue threonine 243 coordinates pyridoxal 5'-phosphate. Catalysis depends on cysteine 328, which acts as the Cysteine persulfide intermediate. Position 328 (cysteine 328) interacts with [2Fe-2S] cluster.

The protein belongs to the class-V pyridoxal-phosphate-dependent aminotransferase family. NifS/IscS subfamily. In terms of assembly, homodimer. Forms a heterotetramer with IscU, interacts with other sulfur acceptors. The cofactor is pyridoxal 5'-phosphate.

It localises to the cytoplasm. The catalysed reaction is (sulfur carrier)-H + L-cysteine = (sulfur carrier)-SH + L-alanine. It functions in the pathway cofactor biosynthesis; iron-sulfur cluster biosynthesis. Functionally, master enzyme that delivers sulfur to a number of partners involved in Fe-S cluster assembly, tRNA modification or cofactor biosynthesis. Catalyzes the removal of elemental sulfur atoms from cysteine to produce alanine. Functions as a sulfur delivery protein for Fe-S cluster synthesis onto IscU, an Fe-S scaffold assembly protein, as well as other S acceptor proteins. The chain is Cysteine desulfurase IscS from Shewanella denitrificans (strain OS217 / ATCC BAA-1090 / DSM 15013).